A 604-amino-acid polypeptide reads, in one-letter code: Uptake hydrogenase large subunit (604 aa).

Positions 76, 79, 583, and 586 each coordinate Ni(2+).

This sequence belongs to the [NiFe]/[NiFeSe] hydrogenase large subunit family. In terms of assembly, heterodimer of a large and a small subunit. It depends on Ni(2+) as a cofactor.

It localises to the cell membrane. It carries out the reaction H2 + A = AH2. In terms of biological role, this enzyme recycles the H(2) produced by nitrogenase to increase the production of ATP and to protect nitrogenase against inhibition or damage by O(2) under carbon- or phosphate-limited conditions. The sequence is that of Uptake hydrogenase large subunit (hoxL) from Afipia carboxidovorans (strain ATCC 49405 / DSM 1227 / KCTC 32145 / OM5) (Oligotropha carboxidovorans).